The chain runs to 220 residues: Chloramphenicol acetyltransferase (220 aa).

H187 serves as the catalytic Proton acceptor.

It belongs to the chloramphenicol acetyltransferase family. In terms of assembly, homotrimer.

The catalysed reaction is chloramphenicol + acetyl-CoA = chloramphenicol 3-acetate + CoA. This enzyme is an effector of chloramphenicol resistance in bacteria. This chain is Chloramphenicol acetyltransferase (cat86), found in Bacillus pumilus (Bacillus mesentericus).